A 152-amino-acid polypeptide reads, in one-letter code: Endoribonuclease YbeY (152 aa).

Positions 114, 118, and 124 each coordinate Zn(2+).

This sequence belongs to the endoribonuclease YbeY family. Requires Zn(2+) as cofactor.

The protein resides in the cytoplasm. Single strand-specific metallo-endoribonuclease involved in late-stage 70S ribosome quality control and in maturation of the 3' terminus of the 16S rRNA. This Wigglesworthia glossinidia brevipalpis protein is Endoribonuclease YbeY.